The primary structure comprises 66 residues: Large ribosomal subunit protein bL35 (66 aa).

Positions 1 to 16 are enriched in basic residues; it reads MPKQKTHRASAKRFKR. The tract at residues 1–20 is disordered; sequence MPKQKTHRASAKRFKRTGSG.

It belongs to the bacterial ribosomal protein bL35 family.

The protein is Large ribosomal subunit protein bL35 of Streptococcus thermophilus (strain ATCC BAA-250 / LMG 18311).